A 550-amino-acid chain; its full sequence is Membrane protein insertase YidC (550 aa).

The chain crosses the membrane as a helical span at residues 6 to 26; the sequence is NLLVIALLFVSFMIWQTWEQD. Disordered stretches follow at residues 28-54 and 111-132; these read APKP…GVPA and QSGL…RPLY. Low complexity predominate over residues 30–52; it reads KPQVQQTTQTTTTAAGSAASQGV. Over residues 111-127 the composition is skewed to polar residues; sequence QSGLTGRNGPDNPNNNK. The next 4 helical transmembrane spans lie at 346 to 366, 421 to 441, 459 to 479, and 500 to 520; these read KWIH…TFIV, LGGC…YYML, LSAQ…MFFI, and PVIF…YYIV.

The protein belongs to the OXA1/ALB3/YidC family. Type 1 subfamily. In terms of assembly, interacts with the Sec translocase complex via SecD. Specifically interacts with transmembrane segments of nascent integral membrane proteins during membrane integration.

It is found in the cell inner membrane. Functionally, required for the insertion and/or proper folding and/or complex formation of integral membrane proteins into the membrane. Involved in integration of membrane proteins that insert both dependently and independently of the Sec translocase complex, as well as at least some lipoproteins. Aids folding of multispanning membrane proteins. This Cronobacter sakazakii (strain ATCC BAA-894) (Enterobacter sakazakii) protein is Membrane protein insertase YidC.